A 482-amino-acid polypeptide reads, in one-letter code: Catalase (482 aa).

Residues H53 and N126 contribute to the active site. Y336 is a heme binding site.

The protein belongs to the catalase family. Heme serves as cofactor.

It is found in the periplasm. The catalysed reaction is 2 H2O2 = O2 + 2 H2O. Functionally, decomposes hydrogen peroxide into water and oxygen; serves to protect cells from the toxic effects of hydrogen peroxide. Could protect cells in nodules which have a high potential to produce hydrogen peroxide because of the strong reducing conditions required for nitrogen fixation and the action of several proteins. The sequence is that of Catalase (katA) from Aliivibrio fischeri (strain ATCC 700601 / ES114) (Vibrio fischeri).